We begin with the raw amino-acid sequence, 546 residues long: Oncoprotein-induced transcript 3 protein (546 aa).

The first 16 residues, 1-16 (MPLSLLLACLFTTVTL), serve as a signal peptide directing secretion. N-linked (GlcNAc...) asparagine glycans are attached at residues asparagine 89 and asparagine 116. In terms of domain architecture, EGF-like; calcium-binding spans 182 to 222 (DENECEHNNGGCSEICVNLKNSHRCACGVGRVLRSDGKTCE). Cystine bridges form between cysteine 186/cysteine 197, cysteine 193/cysteine 206, and cysteine 208/cysteine 221. The 256-residue stretch at 261–516 (TCQVPVLCKS…SRCAQGCHRR (256 aa)) folds into the ZP domain. N-linked (GlcNAc...) asparagine glycosylation occurs at asparagine 299. Residues 524–546 (DEDSAGLQSQTLTGGPISIDWEE) form a disordered region.

It is found in the nucleus envelope. Functionally, may be involved in hepatocellular function and development. This Rattus norvegicus (Rat) protein is Oncoprotein-induced transcript 3 protein (Oit3).